Reading from the N-terminus, the 239-residue chain is Small ribosomal subunit protein eS4 (239 aa).

An S4 RNA-binding domain is found at 37-99 (IPLAVVIRDY…ADLYFRVIPD (63 aa)).

The protein belongs to the eukaryotic ribosomal protein eS4 family.

The sequence is that of Small ribosomal subunit protein eS4 from Saccharolobus islandicus (strain Y.N.15.51 / Yellowstone #2) (Sulfolobus islandicus).